The chain runs to 178 residues: Natriuretic and helokinestatin peptides (178 aa).

The N-terminal stretch at 1–25 (MNPRLACSTWLPLLLVLFTLDQGRA) is a signal peptide. 5 consecutive propeptides follow at residues 26–58 (NPVE…SEEN), 69–73 (ASDEN), 85–89 (ASDEN), 103–112 (ASEQKGPPFN), and 123–146 (AANE…RNKR). Disordered stretches follow at residues 69-107 (ASDE…SEQK) and 135-155 (RSFE…GCFG). Cysteines 153 and 169 form a disulfide.

The protein in the C-terminal section; belongs to the natriuretic peptide family. In terms of tissue distribution, expressed by the venom gland.

It localises to the secreted. Functionally, helokinestatins antagonize the vasodilatory actions of bradykinin at the B2 bradykinin receptor (BDKRB2), with helokinestatin-1 being the most potent antagonist. Its function is as follows. exhibits hypotensive and vasodepressor activities, possibly by targeting natriuretic peptide receptors NPR1 and NPR2. The sequence is that of Natriuretic and helokinestatin peptides from Heloderma suspectum cinctum (Banded Gila monster).